A 330-amino-acid polypeptide reads, in one-letter code: Aspartate--ammonia ligase (330 aa).

Belongs to the class-II aminoacyl-tRNA synthetase family. AsnA subfamily.

It localises to the cytoplasm. The enzyme catalyses L-aspartate + NH4(+) + ATP = L-asparagine + AMP + diphosphate + H(+). It participates in amino-acid biosynthesis; L-asparagine biosynthesis; L-asparagine from L-aspartate (ammonia route): step 1/1. This is Aspartate--ammonia ligase from Streptococcus pyogenes serotype M6 (strain ATCC BAA-946 / MGAS10394).